The sequence spans 301 residues: Probable 2-oxoglutarate-dependent dioxygenase AOP1 (301 aa).

The Fe2OG dioxygenase domain occupies 158-262 (TYYLTRLMKY…RYSTGLFSIP (105 aa)). Positions 186, 188, and 243 each coordinate Fe cation. R253 serves as a coordination point for 2-oxoglutarate.

The protein belongs to the iron/ascorbate-dependent oxidoreductase family. Fe(2+) serves as cofactor.

Probable 2-oxoglutarate-dependent dioxygenase that may be involved in glucosinolates biosynthesis. May play a role in the production of aliphatic glucosinolates. The sequence is that of Probable 2-oxoglutarate-dependent dioxygenase AOP1 (AOP1) from Arabidopsis thaliana (Mouse-ear cress).